The chain runs to 321 residues: uncharacterized protein (321 aa).

Belongs to the NAD(P)-dependent epimerase/dehydratase family.

This is an uncharacterized protein from Staphylococcus aureus (strain MRSA252).